The chain runs to 399 residues: Phosphate acyltransferase (399 aa).

This sequence belongs to the PlsX family. As to quaternary structure, homodimer. Probably interacts with PlsY.

It localises to the cytoplasm. The catalysed reaction is a fatty acyl-[ACP] + phosphate = an acyl phosphate + holo-[ACP]. The protein operates within lipid metabolism; phospholipid metabolism. Catalyzes the reversible formation of acyl-phosphate (acyl-PO(4)) from acyl-[acyl-carrier-protein] (acyl-ACP). This enzyme utilizes acyl-ACP as fatty acyl donor, but not acyl-CoA. This Rhodobacter capsulatus (Rhodopseudomonas capsulata) protein is Phosphate acyltransferase.